Consider the following 866-residue polypeptide: DNA mismatch repair protein MutS (866 aa).

613–620 (GPNMGGKS) is a binding site for ATP.

It belongs to the DNA mismatch repair MutS family.

In terms of biological role, this protein is involved in the repair of mismatches in DNA. It is possible that it carries out the mismatch recognition step. This protein has a weak ATPase activity. The polypeptide is DNA mismatch repair protein MutS (Haemophilus ducreyi (strain 35000HP / ATCC 700724)).